A 196-amino-acid polypeptide reads, in one-letter code: Large ribosomal subunit protein eL15 (196 aa).

The disordered stretch occupies residues 154 to 196 (PGHRGRSERGLTSAGVKGRGMRRRGKGTEKCRPSVRANANRAK).

The protein belongs to the eukaryotic ribosomal protein eL15 family.

The chain is Large ribosomal subunit protein eL15 from Methanospirillum hungatei JF-1 (strain ATCC 27890 / DSM 864 / NBRC 100397 / JF-1).